A 218-amino-acid polypeptide reads, in one-letter code: Probable signal peptidase I-2 (218 aa).

Residues 1–26 are Cytoplasmic-facing; the sequence is MTENIVRETSKKKESPPENTWLELGK. A helical transmembrane segment spans residues 27–43; it reads TMVTAVILAIGIRTFVA. Topologically, residues 44-218 are periplasmic; that stretch reads EARYIPSSSM…ISPQTVPESR (175 aa). Active-site residues include Ser52 and Lys100.

This sequence belongs to the peptidase S26 family.

It is found in the cell membrane. The enzyme catalyses Cleavage of hydrophobic, N-terminal signal or leader sequences from secreted and periplasmic proteins.. The polypeptide is Probable signal peptidase I-2 (lepB2) (Synechocystis sp. (strain ATCC 27184 / PCC 6803 / Kazusa)).